The following is a 255-amino-acid chain: 6-phosphogluconolactonase 4 (255 aa).

The protein belongs to the glucosamine/galactosamine-6-phosphate isomerase family. 6-phosphogluconolactonase subfamily.

The protein resides in the cytoplasm. The catalysed reaction is 6-phospho-D-glucono-1,5-lactone + H2O = 6-phospho-D-gluconate + H(+). It functions in the pathway carbohydrate degradation; pentose phosphate pathway; D-ribulose 5-phosphate from D-glucose 6-phosphate (oxidative stage): step 2/3. Involved in the pentose phosphate pathway via hydrolysis of 6-phosphogluconolactone to 6-phosphogluconate. This Saccharomyces cerevisiae (strain ATCC 204508 / S288c) (Baker's yeast) protein is 6-phosphogluconolactonase 4.